A 498-amino-acid chain; its full sequence is ATP synthase subunit beta, chloroplastic (498 aa).

172-179 lines the ATP pocket; it reads GGAGVGKT.

This sequence belongs to the ATPase alpha/beta chains family. As to quaternary structure, F-type ATPases have 2 components, CF(1) - the catalytic core - and CF(0) - the membrane proton channel. CF(1) has five subunits: alpha(3), beta(3), gamma(1), delta(1), epsilon(1). CF(0) has four main subunits: a(1), b(1), b'(1) and c(9-12).

The protein localises to the plastid. Its subcellular location is the chloroplast thylakoid membrane. The catalysed reaction is ATP + H2O + 4 H(+)(in) = ADP + phosphate + 5 H(+)(out). Its function is as follows. Produces ATP from ADP in the presence of a proton gradient across the membrane. The catalytic sites are hosted primarily by the beta subunits. The sequence is that of ATP synthase subunit beta, chloroplastic from Nicotiana bigelovii (Bigelov's tobacco).